The chain runs to 471 residues: Glutamate--tRNA ligase (471 aa).

Positions 9 to 19 (PSPTGYLHVGG) match the 'HIGH' region motif. Residues C98, C100, C125, and H127 each coordinate Zn(2+). The short motif at 237–241 (KLSKR) is the 'KMSKS' region element. K240 is a binding site for ATP.

This sequence belongs to the class-I aminoacyl-tRNA synthetase family. Glutamate--tRNA ligase type 1 subfamily. Monomer. It depends on Zn(2+) as a cofactor.

Its subcellular location is the cytoplasm. The catalysed reaction is tRNA(Glu) + L-glutamate + ATP = L-glutamyl-tRNA(Glu) + AMP + diphosphate. Catalyzes the attachment of glutamate to tRNA(Glu) in a two-step reaction: glutamate is first activated by ATP to form Glu-AMP and then transferred to the acceptor end of tRNA(Glu). This chain is Glutamate--tRNA ligase, found in Shigella dysenteriae serotype 1 (strain Sd197).